The sequence spans 93 residues: Translation initiation factor IF-1 (93 aa).

In terms of domain architecture, S1-like spans 1 to 72 (MAKEELIQFE…EKGRLIFRHK (72 aa)). Residues 70-93 (RHKDERPGGGPPRGAPPRGQFRRR) are disordered.

The protein belongs to the IF-1 family. In terms of assembly, component of the 30S ribosomal translation pre-initiation complex which assembles on the 30S ribosome in the order IF-2 and IF-3, IF-1 and N-formylmethionyl-tRNA(fMet); mRNA recruitment can occur at any time during PIC assembly.

It is found in the cytoplasm. Functionally, one of the essential components for the initiation of protein synthesis. Stabilizes the binding of IF-2 and IF-3 on the 30S subunit to which N-formylmethionyl-tRNA(fMet) subsequently binds. Helps modulate mRNA selection, yielding the 30S pre-initiation complex (PIC). Upon addition of the 50S ribosomal subunit IF-1, IF-2 and IF-3 are released leaving the mature 70S translation initiation complex. In Rhodopseudomonas palustris (strain BisB18), this protein is Translation initiation factor IF-1.